We begin with the raw amino-acid sequence, 325 residues long: Apoptosis-enhancing nuclease (325 aa).

The Nucleolar localization signal motif lies at 27 to 35 (RKRHKRRSR). A disordered region spans residues 53-105 (LSMPPEPGSSPLPTPFGAVTATEDASSGKQCPRAGSGGAPCSRRPAPGKASGP). Pro residues predominate over residues 56–66 (PPEPGSSPLPT). One can recognise an Exonuclease domain in the interval 110-266 (CVAIDCEMVG…EDATTAMELY (157 aa)). The Nuclear localization signal signature appears at 165–188 (RQHMCKAIPFQVAQKEILKLLKGK). Residues 281 to 325 (LWTCPEDREPDSSTDMEQYMEDQYWPDDLAHGSRGGAREAQDRRN) are disordered. The span at 308–325 (DLAHGSRGGAREAQDRRN) shows a compositional bias: basic and acidic residues.

It localises to the nucleus. It is found in the nucleolus. Exonuclease with activity against single- and double-stranded DNA and RNA. Mediates p53-induced apoptosis. When induced by p53 following DNA damage, digests double-stranded DNA to form single-stranded DNA and amplifies DNA damage signals, leading to enhancement of apoptosis. This chain is Apoptosis-enhancing nuclease (AEN), found in Pongo abelii (Sumatran orangutan).